A 286-amino-acid chain; its full sequence is Bifunctional protein FolD (286 aa).

NADP(+) contacts are provided by residues 166 to 168 (GAS) and I232.

The protein belongs to the tetrahydrofolate dehydrogenase/cyclohydrolase family. In terms of assembly, homodimer.

The catalysed reaction is (6R)-5,10-methylene-5,6,7,8-tetrahydrofolate + NADP(+) = (6R)-5,10-methenyltetrahydrofolate + NADPH. It carries out the reaction (6R)-5,10-methenyltetrahydrofolate + H2O = (6R)-10-formyltetrahydrofolate + H(+). The protein operates within one-carbon metabolism; tetrahydrofolate interconversion. In terms of biological role, catalyzes the oxidation of 5,10-methylenetetrahydrofolate to 5,10-methenyltetrahydrofolate and then the hydrolysis of 5,10-methenyltetrahydrofolate to 10-formyltetrahydrofolate. The sequence is that of Bifunctional protein FolD from Marinobacter nauticus (strain ATCC 700491 / DSM 11845 / VT8) (Marinobacter aquaeolei).